Reading from the N-terminus, the 595-residue chain is MRSQYCGDVNKSHVGQEVTLVGWVNRSRDLGGVVFLDLRDREGIVQVVYDPDLPEVFDVASTLRSEFCVQVTGLVRARPDSQVNQDMRTGGIEILGKGLTILNSSAPLPINMDKNQHNTEEQRLKYRYLDLRRPEMADRIVFRSKVTSAVRRFLDDSGFLDIETPILTKATPEGARDYLVPSRTYKGQFFALPQSPQLFKQLLMMSGFDRYYQIVKCFRDEDLRADRQPEFTQIDIETSFMSSEQVMAKTEEMVRGLFNDLLNVDLGEFPKMTFAEAMRRFGSDKPDLRNPLELIDIADIVKEVEFAVFNGPANDPEGRVAVLSIPGGAKLSRKQLDEYAKYVTIYGAKGLAWMKVNDLDQGMEGIQSPVLKFLSEDVVKALLDRTGAQTGDLILFGADKANIVAEAMGALRLKAGEDFDLLQGEWKPLWVVDFPMFERTSDGGLHAMHHPFTAPTGISPEQLEADPTAAISDAYDMVLNGCELGGGSVRIHNSEMQSAVFRILGIEEEEANEKFGFLLEALRYGTPPHAGLAFGLDRIIMLMTGASSIRDVMAFPKTTTAACPLTNAPGFANPAQLIELGIEVIENQESKEEQA.

Glu173 serves as a coordination point for L-aspartate. Residues 197–200 (QLFK) are aspartate. Arg219 serves as a coordination point for L-aspartate. Residues 219–221 (RDE) and Gln228 contribute to the ATP site. His449 lines the L-aspartate pocket. Glu483 contacts ATP. An L-aspartate-binding site is contributed by Arg490. Residue 535 to 538 (GLDR) participates in ATP binding.

Belongs to the class-II aminoacyl-tRNA synthetase family. Type 1 subfamily. In terms of assembly, homodimer.

It localises to the cytoplasm. It catalyses the reaction tRNA(Asp) + L-aspartate + ATP = L-aspartyl-tRNA(Asp) + AMP + diphosphate. Functionally, catalyzes the attachment of L-aspartate to tRNA(Asp) in a two-step reaction: L-aspartate is first activated by ATP to form Asp-AMP and then transferred to the acceptor end of tRNA(Asp). This is Aspartate--tRNA ligase from Shewanella woodyi (strain ATCC 51908 / MS32).